Consider the following 593-residue polypeptide: Root phototropism protein 2 (593 aa).

Positions 32–100 (TDVVVEVGEA…CYGVNFEITV (69 aa)) constitute a BTB domain. Residues 187–469 (NWWTEELCIL…LHALYYDQLK (283 aa)) form the NPH3 domain. Residue Tyr-410 is modified to Phosphotyrosine.

The protein belongs to the NPH3 family. As to quaternary structure, interacts with RPT3 and PHOT1. As to expression, expressed in hypocotyls, guard cells and mesophyll cells.

Its pathway is protein modification; protein ubiquitination. Its function is as follows. May act as a substrate-specific adapter of an E3 ubiquitin-protein ligase complex (CUL3-RBX1-BTB) which mediates the ubiquitination and subsequent proteasomal degradation of target proteins. Signal transducer of the phototropic response and photo-induced movements. Necessary for root phototropism. Involved in hypocotyl phototropism under high rate but not under low rate light. Regulates stomata opening. Seems to be not involved in chloroplast accumulation and translocation. The sequence is that of Root phototropism protein 2 (RPT2) from Arabidopsis thaliana (Mouse-ear cress).